The chain runs to 111 residues: Universal stress protein B (111 aa).

2 consecutive transmembrane segments (helical) span residues 1–21 and 90–110; these read MISTIALFWALCVVCVVNMAR and FILTSALCGLVVVSLIALMIW.

This sequence belongs to the universal stress protein B family.

Its subcellular location is the cell inner membrane. The sequence is that of Universal stress protein B from Klebsiella pneumoniae (strain 342).